Here is a 322-residue protein sequence, read N- to C-terminus: Cytochrome c biogenesis protein CcsA (322 aa).

7 helical membrane passes run 2–22 (LFATLEHILTHISFSTISIVI), 44–64 (GMIATFFSITGFLVSRWLSSG), 68–88 (LSNLYESLIFLSWALYILHTI), 143–163 (MLLSYATLLCGSLLSAAILII), 226–246 (VISLGFTLLTIGILCGAVWAN), 260–274 (TWAFITWTIFAIYLH), and 289–309 (VASIGFLIIWICYFGINLLGI).

This sequence belongs to the CcmF/CycK/Ccl1/NrfE/CcsA family. As to quaternary structure, may interact with Ccs1.

The protein localises to the plastid. The protein resides in the chloroplast thylakoid membrane. Its function is as follows. Required during biogenesis of c-type cytochromes (cytochrome c6 and cytochrome f) at the step of heme attachment. This Brachypodium distachyon (Purple false brome) protein is Cytochrome c biogenesis protein CcsA.